A 228-amino-acid polypeptide reads, in one-letter code: 2-C-methyl-D-erythritol 4-phosphate cytidylyltransferase (228 aa).

The protein belongs to the IspD/TarI cytidylyltransferase family. IspD subfamily.

It carries out the reaction 2-C-methyl-D-erythritol 4-phosphate + CTP + H(+) = 4-CDP-2-C-methyl-D-erythritol + diphosphate. It participates in isoprenoid biosynthesis; isopentenyl diphosphate biosynthesis via DXP pathway; isopentenyl diphosphate from 1-deoxy-D-xylulose 5-phosphate: step 2/6. Catalyzes the formation of 4-diphosphocytidyl-2-C-methyl-D-erythritol from CTP and 2-C-methyl-D-erythritol 4-phosphate (MEP). The protein is 2-C-methyl-D-erythritol 4-phosphate cytidylyltransferase of Mannheimia succiniciproducens (strain KCTC 0769BP / MBEL55E).